The primary structure comprises 388 residues: Protochlorophyllide reductase A, chloroplastic (388 aa).

The N-terminal 74 residues, 1–74, are a transit peptide targeting the chloroplast; the sequence is MALQLLPSTL…SPSGKKTLRQ (74 aa). Low complexity predominate over residues 48–68; the sequence is VATAPSPVTTSPGSTASSPSG. Residues 48–69 form a disordered region; that stretch reads VATAPSPVTTSPGSTASSPSGK.

It belongs to the short-chain dehydrogenases/reductases (SDR) family. POR subfamily.

The protein resides in the plastid. The protein localises to the chloroplast. The catalysed reaction is chlorophyllide a + NADP(+) = protochlorophyllide a + NADPH + H(+). The protein operates within porphyrin-containing compound metabolism; chlorophyll biosynthesis. Its function is as follows. Phototransformation of protochlorophyllide (Pchlide) to chlorophyllide (Chlide). This is Protochlorophyllide reductase A, chloroplastic (PORA) from Hordeum vulgare (Barley).